We begin with the raw amino-acid sequence, 270 residues long: Urease accessory protein UreD (270 aa).

The protein belongs to the UreD family. In terms of assembly, ureD, UreF and UreG form a complex that acts as a GTP-hydrolysis-dependent molecular chaperone, activating the urease apoprotein by helping to assemble the nickel containing metallocenter of UreC. The UreE protein probably delivers the nickel.

Its subcellular location is the cytoplasm. In terms of biological role, required for maturation of urease via the functional incorporation of the urease nickel metallocenter. This Actinobacillus pleuropneumoniae serotype 3 (strain JL03) protein is Urease accessory protein UreD.